The primary structure comprises 420 residues: Glucose-1-phosphate adenylyltransferase (420 aa).

Alpha-D-glucose 1-phosphate-binding positions include Tyr107, Gly173, 188–189 (EK), and Ser206.

This sequence belongs to the bacterial/plant glucose-1-phosphate adenylyltransferase family. In terms of assembly, homotetramer.

The catalysed reaction is alpha-D-glucose 1-phosphate + ATP + H(+) = ADP-alpha-D-glucose + diphosphate. Its pathway is glycan biosynthesis; glycogen biosynthesis. Its function is as follows. Involved in the biosynthesis of ADP-glucose, a building block required for the elongation reactions to produce glycogen. Catalyzes the reaction between ATP and alpha-D-glucose 1-phosphate (G1P) to produce pyrophosphate and ADP-Glc. This is Glucose-1-phosphate adenylyltransferase from Shewanella oneidensis (strain ATCC 700550 / JCM 31522 / CIP 106686 / LMG 19005 / NCIMB 14063 / MR-1).